We begin with the raw amino-acid sequence, 258 residues long: Imidazole glycerol phosphate synthase subunit HisF (258 aa).

Catalysis depends on residues aspartate 11 and aspartate 130.

The protein belongs to the HisA/HisF family. In terms of assembly, heterodimer of HisH and HisF.

The protein localises to the cytoplasm. It catalyses the reaction 5-[(5-phospho-1-deoxy-D-ribulos-1-ylimino)methylamino]-1-(5-phospho-beta-D-ribosyl)imidazole-4-carboxamide + L-glutamine = D-erythro-1-(imidazol-4-yl)glycerol 3-phosphate + 5-amino-1-(5-phospho-beta-D-ribosyl)imidazole-4-carboxamide + L-glutamate + H(+). It functions in the pathway amino-acid biosynthesis; L-histidine biosynthesis; L-histidine from 5-phospho-alpha-D-ribose 1-diphosphate: step 5/9. IGPS catalyzes the conversion of PRFAR and glutamine to IGP, AICAR and glutamate. The HisF subunit catalyzes the cyclization activity that produces IGP and AICAR from PRFAR using the ammonia provided by the HisH subunit. The polypeptide is Imidazole glycerol phosphate synthase subunit HisF (Escherichia coli O17:K52:H18 (strain UMN026 / ExPEC)).